The primary structure comprises 1472 residues: ABC multidrug transporter atrI (1472 aa).

The tract at residues methionine 1 to aspartate 28 is disordered. In terms of domain architecture, ABC transporter 1 spans phenylalanine 134 to proline 384. N-linked (GlcNAc...) asparagine glycans are attached at residues asparagine 143, asparagine 277, asparagine 308, and asparagine 332. 7 helical membrane-spanning segments follow: residues isoleucine 506–tyrosine 526, alanine 530–leucine 550, isoleucine 580–leucine 600, serine 605–phenylalanine 625, methionine 639–valine 659, proline 664–alanine 684, and phenylalanine 744–leucine 764. A compositionally biased stretch (basic and acidic residues) spans alanine 784 to glycine 793. The segment at alanine 784 to isoleucine 821 is disordered. Residues valine 804–isoleucine 821 are compositionally biased toward polar residues. Residues phenylalanine 828–glycine 1070 form the ABC transporter 2 domain. Residue glycine 864 to threonine 871 coordinates ATP. Helical transmembrane passes span tyrosine 1168–phenylalanine 1188, valine 1204–threonine 1224, phenylalanine 1244–phenylalanine 1264, leucine 1282–isoleucine 1302, glutamate 1309–methionine 1329, and glycine 1337–alanine 1357. Asparagine 1402 carries N-linked (GlcNAc...) asparagine glycosylation. A helical membrane pass occupies residues phenylalanine 1433–cysteine 1453. An N-linked (GlcNAc...) asparagine glycan is attached at asparagine 1460.

This sequence belongs to the ABC transporter superfamily. ABCG family. PDR (TC 3.A.1.205) subfamily.

Its subcellular location is the cell membrane. It carries out the reaction itraconazole(in) + ATP + H2O = itraconazole(out) + ADP + phosphate + H(+). The enzyme catalyses voriconazole(in) + ATP + H2O = voriconazole(out) + ADP + phosphate + H(+). It catalyses the reaction fluconazole(in) + ATP + H2O = fluconazole(out) + ADP + phosphate + H(+). In terms of biological role, pleiotropic ABC efflux transporter involved in the basal level of azole susceptibility. Confers resistance to fluconazole, itraconazole and voriconazole. This Aspergillus fumigatus (strain ATCC MYA-4609 / CBS 101355 / FGSC A1100 / Af293) (Neosartorya fumigata) protein is ABC multidrug transporter atrI.